Consider the following 361-residue polypeptide: Outer mitochondrial transmembrane helix translocase (361 aa).

Topologically, residues 1–15 (MVHAETFSRPLSRNE) are mitochondrial intermembrane. A helical transmembrane segment spans residues 16 to 32 (VVGLIFRLTIFGAVTYF). At 33 to 361 (TIKWMVDAID…QNVLTHVCLD (329 aa)) the chain is on the cytoplasmic side. 133–140 (GPPGCGKT) provides a ligand contact to ATP. The residue at position 322 (S322) is a Phosphoserine.

This sequence belongs to the AAA ATPase family. MSP1 subfamily. In terms of assembly, interacts with GRIA2 and GRIP1 in an ATP-dependent manner. ATAD1-catalyzed ATP hydrolysis disrupts not only its binding to GRIA2 and GRIP1, but also interaction between GRIP1 and GRIA2, leading to AMPAR complex disassembly.

It localises to the mitochondrion outer membrane. The protein localises to the peroxisome membrane. The protein resides in the postsynaptic cell membrane. It carries out the reaction [protein]-with a C-terminal TM segment(out) + ATP + H2O = [protein]-with a C-terminal TM segment(in) + ADP + phosphate + H(+). Its function is as follows. Outer mitochondrial translocase required to remove mislocalized tail-anchored transmembrane proteins on mitochondria. Specifically recognizes and binds tail-anchored transmembrane proteins: acts as a dislocase that mediates the ATP-dependent extraction of mistargeted tail-anchored transmembrane proteins from the mitochondrion outer membrane. Also plays a critical role in regulating the surface expression of AMPA receptors (AMPAR), thereby regulating synaptic plasticity and learning and memory. Required for NMDA-stimulated AMPAR internalization and inhibition of GRIA1 and GRIA2 recycling back to the plasma membrane; these activities are ATPase-dependent. The polypeptide is Outer mitochondrial transmembrane helix translocase (Bos taurus (Bovine)).